A 259-amino-acid polypeptide reads, in one-letter code: Protein-L-isoaspartate O-methyltransferase 1 (259 aa).

The active site involves serine 109.

The protein belongs to the methyltransferase superfamily. L-isoaspartyl/D-aspartyl protein methyltransferase family.

Its subcellular location is the cytoplasm. The catalysed reaction is [protein]-L-isoaspartate + S-adenosyl-L-methionine = [protein]-L-isoaspartate alpha-methyl ester + S-adenosyl-L-homocysteine. Catalyzes the methyl esterification of L-isoaspartyl residues in peptides and proteins that result from spontaneous decomposition of normal L-aspartyl and L-asparaginyl residues. It plays a role in the repair and/or degradation of damaged proteins. The sequence is that of Protein-L-isoaspartate O-methyltransferase 1 from Cupriavidus necator (strain ATCC 17699 / DSM 428 / KCTC 22496 / NCIMB 10442 / H16 / Stanier 337) (Ralstonia eutropha).